Here is a 1450-residue protein sequence, read N- to C-terminus: Collagen alpha-1(I) chain (1450 aa).

A signal peptide spans 1-22; the sequence is MFSFVDNRLLVLLAACVLLVRA. A propeptide spans 23 to 148 (N-terminal propeptide); the sequence is LDQEDIESGL…PPGLGGNFAP (126 aa). One can recognise a VWFC domain in the interval 31–90; it reads GLCHQEGTTYSDKDVWKPEPCVICVCDNGNIMCDDVTCGDYPVDCPNAEIPFGECCPVCP. The segment at 97–1201 is disordered; it reads YSEQTGVEGP…EPKSHGDGRY (1105 aa). Over residues 106-116 the composition is skewed to basic and acidic residues; the sequence is PKGEVGPKGDR. Pro residues predominate over residues 130-140; that stretch reads LPGPPGPPGPP. Pyrrolidone carboxylic acid is present on glutamine 149. The residue at position 157 (lysine 157) is an Allysine. The segment covering 166-181 has biased composition (pro residues); the sequence is PMGPMGPRGPPGPSGS. Residues proline 176, proline 182, proline 194, proline 197, proline 212, proline 227, proline 242, and proline 248 each carry the 4-hydroxyproline modification. A compositionally biased stretch (low complexity) spans 182-206; it reads PGPQGFQGPSGEPGEPGAAGALGPR. Residues 215–229 show a composition bias toward basic and acidic residues; sequence NGDDGESGKPGRPGE. Lysine 251 bears the 5-hydroxylysine; alternate mark. Lysine 251 is a glycosylation site (O-linked (Gal...) hydroxylysine; alternate). A compositionally biased stretch (low complexity) spans 266-292; sequence NGPAGPKGEPGNPGENGAPGQAGPRGL. 4-hydroxyproline is present on residues proline 275, proline 278, proline 284, proline 293, proline 299, proline 314, proline 320, proline 329, proline 332, proline 359, proline 362, proline 374, proline 380, proline 389, proline 395, proline 398, and proline 413. The segment covering 317-331 has biased composition (pro residues); the sequence is AGPPGPTGPTGPPGF. The segment covering 352–374 has biased composition (low complexity); it reads PQGARGEPGAPGPAGAAGPSGNP. Over residues 378 to 387 the composition is skewed to gly residues; sequence GQPGGKGATG. The span at 388–443 shows a compositional bias: low complexity; that stretch reads SPGIAGAPGFPGARGAPGPQGPAGAPGPKGNNGEPGAQGNKGEPGAKGEPGPAGVQ. Lysine 416 carries the 5-hydroxylysine modification. 4-hydroxyproline occurs at positions 422, 437, 446, 461, 467, 476, and 482. The segment covering 471–480 has biased composition (gly residues); the sequence is GERGGPGSRG. Lysine 491 is subject to 5-hydroxylysine. 4-hydroxyproline occurs at positions 494, 515, 521, 530, 533, 551, 569, 578, 590, 608, 626, 632, 644, 650, 656, and 668. Low complexity-rich tracts occupy residues 568-578 and 586-596; these read FPGPKGAAGEP and VAGPPGATGAP. Low complexity predominate over residues 637–650; it reads PAGEAGKPGEQGAP. Positions 669–678 are enriched in gly residues; that stretch reads GERGGQGPAG. Residues 679–701 show a composition bias toward low complexity; that stretch reads AQGPRGSPGSPGNDGAKGEAGAA. 5 positions are modified to 4-hydroxyproline: proline 689, proline 704, proline 710, proline 716, and proline 725. Over residues 702–711 the composition is skewed to gly residues; the sequence is GAPGGRGPPG. Lysine 737 carries the 5-hydroxylysine modification. Proline 743, proline 758, proline 764, proline 785, proline 791, proline 794, proline 803, proline 809, proline 827, proline 836, and proline 845 each carry 4-hydroxyproline. Residues 796 to 806 are compositionally biased toward low complexity; that stretch reads PAGICGPPGAD. Residues 817-869 show a composition bias toward low complexity; the sequence is DAGPKGDAGAPGPAGPTGAPGPAGNVGAPGPKGTRGAAGPPGATGFPGAAGRL. Lysine 848 carries the post-translational modification 5-hydroxylysine. 2 positions are modified to 4-hydroxyproline: proline 857 and proline 863. The residue at position 871 (proline 871) is a 3-hydroxyproline. 4-hydroxyproline is present on residues proline 872, proline 881, proline 884, proline 908, proline 914, proline 923, proline 932, proline 950, proline 962, proline 968, proline 983, proline 989, proline 995, proline 1004, and proline 1010. The span at 917 to 943 shows a compositional bias: low complexity; the sequence is SGEKGSPGSDGPAGAPGIPGPQGIAGQ. Positions 982–997 are enriched in pro residues; sequence PPGPSGPPGLGGPPGE. Position 1019 is a 5-hydroxylysine (lysine 1019). A compositionally biased stretch (pro residues) spans 1028-1043; the sequence is SGPPGAPGAPGAPGPV. A 4-hydroxyproline mark is found at proline 1031, proline 1034, and proline 1037. The span at 1064–1078 shows a compositional bias: low complexity; the sequence is AGPSGVRGAPGPAGA. A compositionally biased stretch (basic and acidic residues) spans 1079–1093; the sequence is RGDKGEAGEQGERGM. Lysine 1082 carries the post-translational modification 5-hydroxylysine. Lysine 1094 is subject to 5-hydroxylysine; alternate. An O-linked (Gal...) hydroxylysine; alternate glycan is attached at lysine 1094. A 4-hydroxyproline mark is found at proline 1106 and proline 1109. A compositionally biased stretch (pro residues) spans 1120–1129; the sequence is PSGPAGPRGP. 2 positions are modified to 4-hydroxyproline: proline 1130 and proline 1145. Residues 1130–1145 are compositionally biased toward low complexity; it reads PGSSGSTGKDGVNGLP. Position 1150 is a 3-hydroxyproline (proline 1150). Proline 1151 is subject to 4-hydroxyproline. The span at 1163–1178 shows a compositional bias: pro residues; it reads AGPPGPPGPPGPPGPP. 3-hydroxyproline is present on proline 1165. 4-hydroxyproline is present on proline 1166. The residue at position 1168 (proline 1168) is a 3-hydroxyproline. Position 1169 is a 4-hydroxyproline (proline 1169). A 3-hydroxyproline modification is found at proline 1171. 3 positions are modified to 4-hydroxyproline: proline 1172, proline 1175, and proline 1178. The residue at position 1194 (lysine 1194) is an Allysine. Positions 1205 to 1450 are cleaved as a propeptide — C-terminal propeptide; it reads DDANVVRDRD…GIDIGPVCFL (246 aa). Positions 1215–1450 constitute a Fibrillar collagen NC1 domain; the sequence is LEVDTTLKSL…GIDIGPVCFL (236 aa). 3 disulfides stabilise this stretch: cysteine 1245-cysteine 1277, cysteine 1285-cysteine 1448, and cysteine 1356-cysteine 1401. The Ca(2+) site is built by aspartate 1263, asparagine 1265, glutamine 1266, cysteine 1268, and aspartate 1271. N-linked (GlcNAc...) asparagine glycosylation occurs at asparagine 1351.

Belongs to the fibrillar collagen family. In terms of assembly, trimers of one alpha 2(I) and two alpha 1(I) chains. Post-translationally, contains mostly 4-hydroxyproline. Proline residues at the third position of the tripeptide repeating unit (G-X-Y) are hydroxylated in some or all of the chains. In terms of processing, contains 3-hydroxyproline at a few sites. This modification occurs on the first proline residue in the sequence motif Gly-Pro-Hyp, where Hyp is 4-hydroxyproline. Lysine residues at the third position of the tripeptide repeating unit (G-X-Y) are 5-hydroxylated in some or all of the chains. Post-translationally, O-glycosylated on hydroxylated lysine residues. The O-linked glycan consists of a Glc-Gal disaccharide.

It is found in the secreted. Its subcellular location is the extracellular space. The protein localises to the extracellular matrix. Its function is as follows. Type I collagen is a member of group I collagen (fibrillar forming collagen). The protein is Collagen alpha-1(I) chain (COL1A1) of Cynops pyrrhogaster (Japanese fire-bellied newt).